Consider the following 478-residue polypeptide: Alpha-1,3-mannosyl-glycoprotein 4-beta-N-acetylglucosaminyltransferase C (478 aa).

Over 1-23 (MFKFHQMKHIFEILDKMRCLRKR) the chain is Cytoplasmic. A helical; Signal-anchor for type II membrane protein transmembrane segment spans residues 24-44 (STVSFLGVLVIFLLFMNLYIE). The Lumenal portion of the chain corresponds to 45-478 (DSYVLEGDKQ…IIRSISIWTS (434 aa)). 2 N-linked (GlcNAc...) asparagine glycosylation sites follow: N84 and N215.

The protein belongs to the glycosyltransferase 54 family. A divalent metal cation is required as a cofactor.

It localises to the golgi apparatus membrane. The enzyme catalyses N(4)-{beta-D-GlcNAc-(1-&gt;2)-alpha-D-Man-(1-&gt;3)-[beta-D-GlcNAc-(1-&gt;2)-alpha-D-Man-(1-&gt;6)]-beta-D-Man-(1-&gt;4)-beta-D-GlcNAc-(1-&gt;4)-beta-D-GlcNAc}-L-asparaginyl-[protein] + UDP-N-acetyl-alpha-D-glucosamine = N(4)-{beta-D-GlcNAc-(1-&gt;2)-[beta-D-GlcNAc-(1-&gt;4)]-alpha-D-Man-(1-&gt;3)-[beta-D-GlcNAc-(1-&gt;2)-alpha-D-Man-(1-&gt;6)]-beta-D-Man-(1-&gt;4)-beta-D-GlcNAc-(1-&gt;4)-beta-D-GlcNAc}-L-asparaginyl-[protein] + UDP + H(+). It participates in protein modification; protein glycosylation. Its function is as follows. Glycosyltransferase that participates in the transfer of N-acetylglucosamine (GlcNAc) to the core mannose residues of N-linked glycans. Catalyzes the formation of the GlcNAcbeta1-4 branch on the GlcNAcbeta1-2Manalpha1-3 arm of the core structure of N-linked glycans. Essential for the production of tri- and tetra-antennary N-linked sugar chains. Does not catalyze the transfer of GlcNAc to the Manalpha1-6 arm to form GlcNAcBeta1-4Manalpha1-6 linkage ('GnT-VI' activity). In Macaca fascicularis (Crab-eating macaque), this protein is Alpha-1,3-mannosyl-glycoprotein 4-beta-N-acetylglucosaminyltransferase C (MGAT4C).